The primary structure comprises 453 residues: Putative amino acid/polyamine transporter MPH_07630_2 (453 aa).

The next 3 membrane-spanning stretches (helical) occupy residues 2 to 21 (IGFS…VLVV), 30 to 50 (VMIW…YSMA), and 81 to 101 (VCGW…NFIA). Asparagine 110 is a glycosylation site (N-linked (GlcNAc...) asparagine). 2 consecutive transmembrane segments (helical) span residues 121–141 (WHAV…SIFL) and 151–171 (AILI…LATN). Asparagine 186 carries N-linked (GlcNAc...) asparagine glycosylation. Transmembrane regions (helical) follow at residues 193-213 (AYAA…YDAP) and 231-251 (IVMS…SLCF). An N-linked (GlcNAc...) asparagine glycan is attached at asparagine 274. 4 consecutive transmembrane segments (helical) span residues 277 to 297 (GSVA…LVCA), 330 to 350 (LGVP…FNSI), 358 to 378 (FNTV…IPLL), and 403 to 423 (GLLA…TFNF). N-linked (GlcNAc...) asparagine glycosylation is present at asparagine 435.

This sequence belongs to the amino acid-polyamine-organocation (APC) superfamily.

The protein localises to the membrane. In Macrophomina phaseolina (strain MS6) (Charcoal rot fungus), this protein is Putative amino acid/polyamine transporter MPH_07630_2.